A 335-amino-acid chain; its full sequence is Glycerol-3-phosphate dehydrogenase [NAD(P)+] (335 aa).

NADPH is bound by residues Ser-10, Phe-11, Arg-31, and Lys-105. Lys-105, Gly-136, and Ser-138 together coordinate sn-glycerol 3-phosphate. An NADPH-binding site is contributed by Ala-140. Sn-glycerol 3-phosphate contacts are provided by Lys-191, Asp-244, Ser-254, Arg-255, and Asn-256. Lys-191 functions as the Proton acceptor in the catalytic mechanism. Residue Arg-255 coordinates NADPH. NADPH-binding residues include Val-279 and Glu-281.

The protein belongs to the NAD-dependent glycerol-3-phosphate dehydrogenase family.

The protein localises to the cytoplasm. It catalyses the reaction sn-glycerol 3-phosphate + NAD(+) = dihydroxyacetone phosphate + NADH + H(+). It carries out the reaction sn-glycerol 3-phosphate + NADP(+) = dihydroxyacetone phosphate + NADPH + H(+). The protein operates within membrane lipid metabolism; glycerophospholipid metabolism. In terms of biological role, catalyzes the reduction of the glycolytic intermediate dihydroxyacetone phosphate (DHAP) to sn-glycerol 3-phosphate (G3P), the key precursor for phospholipid synthesis. The protein is Glycerol-3-phosphate dehydrogenase [NAD(P)+] of Leptospira interrogans serogroup Icterohaemorrhagiae serovar copenhageni (strain Fiocruz L1-130).